A 123-amino-acid chain; its full sequence is Large ribosomal subunit protein uL14 (123 aa).

It belongs to the universal ribosomal protein uL14 family. As to quaternary structure, part of the 50S ribosomal subunit. Forms a cluster with proteins L3 and L19. In the 70S ribosome, L14 and L19 interact and together make contacts with the 16S rRNA in bridges B5 and B8.

Binds to 23S rRNA. Forms part of two intersubunit bridges in the 70S ribosome. The sequence is that of Large ribosomal subunit protein uL14 from Chromohalobacter salexigens (strain ATCC BAA-138 / DSM 3043 / CIP 106854 / NCIMB 13768 / 1H11).